The following is a 194-amino-acid chain: Imidazoleglycerol-phosphate dehydratase (194 aa).

The protein belongs to the imidazoleglycerol-phosphate dehydratase family.

It is found in the cytoplasm. It carries out the reaction D-erythro-1-(imidazol-4-yl)glycerol 3-phosphate = 3-(imidazol-4-yl)-2-oxopropyl phosphate + H2O. The protein operates within amino-acid biosynthesis; L-histidine biosynthesis; L-histidine from 5-phospho-alpha-D-ribose 1-diphosphate: step 6/9. In Bacillus velezensis (strain DSM 23117 / BGSC 10A6 / LMG 26770 / FZB42) (Bacillus amyloliquefaciens subsp. plantarum), this protein is Imidazoleglycerol-phosphate dehydratase.